The following is a 424-amino-acid chain: Protein shisa-9 (424 aa).

Residues 1–23 form the signal peptide; the sequence is MRRVLRLLLGCFLTELCARMCRA. Topologically, residues 24–149 are extracellular; sequence QERSGHGQLA…DPLHDPTKDK (126 aa). Asparagine 45, asparagine 89, and asparagine 116 each carry an N-linked (GlcNAc...) asparagine glycan. The helical transmembrane segment at 150-170 threads the bilayer; sequence TNLIVYIICGVVAVMVLVGIF. Residues 171-424 lie on the Cytoplasmic side of the membrane; it reads TKLGLEKAHR…ITNSKTEVTV (254 aa). Disordered stretches follow at residues 333–373 and 389–424; these read PRAF…TWDP and LGIAESGSCDPLGTRTQHFPPTQPYFITNSKTEVTV. 2 stretches are compositionally biased toward polar residues: residues 362–373 and 402–424; these read YNSTANFKTWDP and TRTQHFPPTQPYFITNSKTEVTV.

It belongs to the shisa family. SHISA9 subfamily. In terms of assembly, component of some AMPA receptors (ionotropic glutamate receptors) complex, at least composed of some AMPA receptor (GRIA1, GRIA2 and/or GRIA3), CACNG2 and SHISA9, as well as low level of DLG4. In terms of tissue distribution, brain-specific. Mainly expressed in neurons, including in hippocampus, cerebral cortex, striatum, thalamus, olfactory bulb and cerebellum. Expressed in most brain structures during embryonic and postnatal development.

It is found in the cell projection. Its subcellular location is the dendritic spine membrane. The protein resides in the synapse. Its function is as follows. Regulator of short-term neuronal synaptic plasticity in the dentate gyrus. Associates with AMPA receptors (ionotropic glutamate receptors) in synaptic spines and promotes AMPA receptor desensitization at excitatory synapses. The chain is Protein shisa-9 (Shisa9) from Mus musculus (Mouse).